The following is a 362-amino-acid chain: Protein RecA (362 aa).

77 to 84 (GPESSGKT) contributes to the ATP binding site.

Belongs to the RecA family.

The protein resides in the cytoplasm. Functionally, can catalyze the hydrolysis of ATP in the presence of single-stranded DNA, the ATP-dependent uptake of single-stranded DNA by duplex DNA, and the ATP-dependent hybridization of homologous single-stranded DNAs. It interacts with LexA causing its activation and leading to its autocatalytic cleavage. This is Protein RecA from Allorhizobium ampelinum (strain ATCC BAA-846 / DSM 112012 / S4) (Agrobacterium vitis (strain S4)).